The following is a 291-amino-acid chain: Gamma-sarcoglycan (291 aa).

At 1–37 (MVREQYTTVTEGTHIERPENQHIYKIGIYGWRKRCLY) the chain is on the cytoplasmic side. The helical; Signal-anchor for type II membrane protein transmembrane segment at 38–58 (LFVLLLLAILVVNLALTIWIL) threads the bilayer. The Extracellular portion of the chain corresponds to 59-291 (KVMWFSPIGM…TCEEHSHVCL (233 aa)). The N-linked (GlcNAc...) asparagine glycan is linked to asparagine 110. Intrachain disulfides connect cysteine 265-cysteine 290 and cysteine 267-cysteine 283.

It belongs to the sarcoglycan beta/delta/gamma/zeta family. Interacts with the syntrophin SNTA1 and FLNC. Cross-link to form 2 major subcomplexes: one consisting of SGCB, SGCD and SGCG and the other consisting of SGCB and SGCD. The association between SGCB and SGCG is particularly strong while SGCA is loosely associated with the other sarcoglycans. Most strongly expressed in skeletal and heart muscle. Also detected in proliferating myoblasts.

The protein resides in the cell membrane. It localises to the sarcolemma. The protein localises to the cytoplasm. Its subcellular location is the cytoskeleton. In terms of biological role, component of the sarcoglycan complex, a subcomplex of the dystrophin-glycoprotein complex which forms a link between the F-actin cytoskeleton and the extracellular matrix. In Mus musculus (Mouse), this protein is Gamma-sarcoglycan (Sgcg).